The primary structure comprises 99 residues: Cell division protein FtsB (99 aa).

The Cytoplasmic portion of the chain corresponds to 1–3 (MRV). A helical transmembrane segment spans residues 4-21 (FTAILLILLVLLQYRLWF). Residues 22–99 (GKNSVPDYLV…KENSTRNVNN (78 aa)) are Periplasmic-facing. The stretch at 29–53 (YLVLKENVVRQQSANEKLQQRNKLL) forms a coiled coil.

Belongs to the FtsB family. Part of a complex composed of FtsB, FtsL and FtsQ.

The protein resides in the cell inner membrane. Functionally, essential cell division protein. May link together the upstream cell division proteins, which are predominantly cytoplasmic, with the downstream cell division proteins, which are predominantly periplasmic. The protein is Cell division protein FtsB of Colwellia psychrerythraea (strain 34H / ATCC BAA-681) (Vibrio psychroerythus).